The chain runs to 424 residues: Gamma-glutamyl phosphate reductase (424 aa).

This sequence belongs to the gamma-glutamyl phosphate reductase family.

Its subcellular location is the cytoplasm. It catalyses the reaction L-glutamate 5-semialdehyde + phosphate + NADP(+) = L-glutamyl 5-phosphate + NADPH + H(+). It functions in the pathway amino-acid biosynthesis; L-proline biosynthesis; L-glutamate 5-semialdehyde from L-glutamate: step 2/2. Catalyzes the NADPH-dependent reduction of L-glutamate 5-phosphate into L-glutamate 5-semialdehyde and phosphate. The product spontaneously undergoes cyclization to form 1-pyrroline-5-carboxylate. In Shewanella woodyi (strain ATCC 51908 / MS32), this protein is Gamma-glutamyl phosphate reductase.